The chain runs to 156 residues: Peptidyl-prolyl cis-trans isomerase H (156 aa).

Residues 1–155 (TPAGRLKCEL…MAVRITQCGE (155 aa)) form the PPIase cyclophilin-type domain.

This sequence belongs to the cyclophilin-type PPIase family. PPIase H subfamily.

It is found in the nucleus. The catalysed reaction is [protein]-peptidylproline (omega=180) = [protein]-peptidylproline (omega=0). PPIases accelerate the folding of proteins. It catalyzes the cis-trans isomerization of proline imidic peptide bonds in oligopeptides. The polypeptide is Peptidyl-prolyl cis-trans isomerase H (CYP3) (Mycosarcoma maydis (Corn smut fungus)).